Here is a 459-residue protein sequence, read N- to C-terminus: Arginine biosynthesis bifunctional protein ArgJ, mitochondrial (459 aa).

The substrate site is built by Thr-187, Lys-216, Thr-227, Glu-314, Asn-454, and Thr-459. The Nucleophile role is filled by Thr-227.

It belongs to the ArgJ family. As to quaternary structure, heterodimer of an alpha and a beta chain. Post-translationally, the alpha and beta chains are autoproteolytically processed from a single precursor protein within the mitochondrion.

The protein localises to the mitochondrion matrix. It catalyses the reaction N(2)-acetyl-L-ornithine + L-glutamate = N-acetyl-L-glutamate + L-ornithine. It carries out the reaction L-glutamate + acetyl-CoA = N-acetyl-L-glutamate + CoA + H(+). The protein operates within amino-acid biosynthesis; L-arginine biosynthesis; L-ornithine and N-acetyl-L-glutamate from L-glutamate and N(2)-acetyl-L-ornithine (cyclic): step 1/1. It participates in amino-acid biosynthesis; L-arginine biosynthesis; N(2)-acetyl-L-ornithine from L-glutamate: step 1/4. In terms of biological role, catalyzes two activities which are involved in the cyclic version of arginine biosynthesis: the synthesis of acetylglutamate from glutamate and acetyl-CoA, and of ornithine by transacetylation between acetylornithine and glutamate. This is Arginine biosynthesis bifunctional protein ArgJ, mitochondrial from Uncinocarpus reesii (strain UAMH 1704).